A 428-amino-acid chain; its full sequence is Protein ECERIFERUM 26 (428 aa).

The disordered stretch occupies residues 1 to 36 (MGRSQEQGQGQGPVHSIRLSTVGATRPTETGTTHEP). Over residues 21–36 (TVGATRPTETGTTHEP) the composition is skewed to low complexity.

It belongs to the plant acyltransferase family. As to expression, highly expressed in leaves.

It localises to the cytoplasm. The protein localises to the cytosol. Involved in biosynthesis of the epicuticular wax. Plays a role in very-long-chain fatty acid (VLCFA) biosynthesis and is required for C30 fatty acid elongation in leaf. Despite its classification as a BAHD acyltransferase based on sequence homology, CER26 does not seem to share the catalytic mechanism of the members of the BAHD family. This Arabidopsis thaliana (Mouse-ear cress) protein is Protein ECERIFERUM 26 (CER26).